Consider the following 351-residue polypeptide: MVHQLSLVSSIPHNKYLQTISTLQALTGLIQPESISTYTLLAKPSYAFKPKFEPGKVNQIEQYYMRCITTWNSDKQGDDEKVEKGFDISEPFINKESNIVVRKLFTEEDSVERVWTLQVSDIPVAGKNQGCCQQQIYESTLVHTHTAIEIKVGNGDPIDIDTNNDKQGDNNTDKPKQEHDGKLPEAIDEDIIKNGDEKKTTHDDNDSDIMEIDEPNPETQTLPQSLSNGVSQRTTRKDSFLIFLSDLGYEVINQYWQKGVRFFYGDIIIEIYKIFIRDESSQADSNEGIKLKLLDDSNQFQIKAYININKSTEIDSINSGVKELIKLQEFLKNLFVLEIPDRMFMDSRIKQ.

The segment at Gly-153–Ser-231 is disordered. Residues Asn-163–Asp-204 are compositionally biased toward basic and acidic residues. Residues Asn-205–Asn-216 show a composition bias toward acidic residues. The segment covering Pro-217–Ser-231 has biased composition (polar residues).

This sequence belongs to the Mediator complex subunit 18 family. In terms of assembly, component of the Mediator complex.

It is found in the nucleus. Its function is as follows. Component of the Mediator complex, a coactivator involved in the regulated transcription of nearly all RNA polymerase II-dependent genes. Mediator functions as a bridge to convey information from gene-specific regulatory proteins to the basal RNA polymerase II transcription machinery. Mediator is recruited to promoters by direct interactions with regulatory proteins and serves as a scaffold for the assembly of a functional preinitiation complex with RNA polymerase II and the general transcription factors. This Candida albicans (strain SC5314 / ATCC MYA-2876) (Yeast) protein is Mediator of RNA polymerase II transcription subunit 18 (SRB5).